Here is a 123-residue protein sequence, read N- to C-terminus: Small ribosomal subunit protein bS6 (123 aa).

Positions 102–123 (MLKQKEERAPRREAEAKEFAAE) are disordered. Residues 104–123 (KQKEERAPRREAEAKEFAAE) are compositionally biased toward basic and acidic residues.

Belongs to the bacterial ribosomal protein bS6 family.

Its function is as follows. Binds together with bS18 to 16S ribosomal RNA. In Vibrio vulnificus (strain CMCP6), this protein is Small ribosomal subunit protein bS6.